Here is a 338-residue protein sequence, read N- to C-terminus: Holliday junction branch migration complex subunit RuvB (338 aa).

Residues 1 to 181 are large ATPase domain (RuvB-L); sequence MERAITPEKR…FGVISRLEFY (181 aa). Residues leucine 20, arginine 21, glycine 62, lysine 65, threonine 66, threonine 67, 128-130, arginine 171, tyrosine 181, and arginine 218 each bind ATP; that span reads EDF. Mg(2+) is bound at residue threonine 66. A small ATPAse domain (RuvB-S) region spans residues 182-252; the sequence is THDELAFIVT…VVQETLRLLE (71 aa). The tract at residues 255–338 is head domain (RuvB-H); that stretch reads EMGFDQMDRM…TPERPQGSLF (84 aa). 2 residues coordinate DNA: arginine 310 and arginine 315.

This sequence belongs to the RuvB family. As to quaternary structure, homohexamer. Forms an RuvA(8)-RuvB(12)-Holliday junction (HJ) complex. HJ DNA is sandwiched between 2 RuvA tetramers; dsDNA enters through RuvA and exits via RuvB. An RuvB hexamer assembles on each DNA strand where it exits the tetramer. Each RuvB hexamer is contacted by two RuvA subunits (via domain III) on 2 adjacent RuvB subunits; this complex drives branch migration. In the full resolvosome a probable DNA-RuvA(4)-RuvB(12)-RuvC(2) complex forms which resolves the HJ.

It localises to the cytoplasm. The enzyme catalyses ATP + H2O = ADP + phosphate + H(+). The RuvA-RuvB-RuvC complex processes Holliday junction (HJ) DNA during genetic recombination and DNA repair, while the RuvA-RuvB complex plays an important role in the rescue of blocked DNA replication forks via replication fork reversal (RFR). RuvA specifically binds to HJ cruciform DNA, conferring on it an open structure. The RuvB hexamer acts as an ATP-dependent pump, pulling dsDNA into and through the RuvAB complex. RuvB forms 2 homohexamers on either side of HJ DNA bound by 1 or 2 RuvA tetramers; 4 subunits per hexamer contact DNA at a time. Coordinated motions by a converter formed by DNA-disengaged RuvB subunits stimulates ATP hydrolysis and nucleotide exchange. Immobilization of the converter enables RuvB to convert the ATP-contained energy into a lever motion, pulling 2 nucleotides of DNA out of the RuvA tetramer per ATP hydrolyzed, thus driving DNA branch migration. The RuvB motors rotate together with the DNA substrate, which together with the progressing nucleotide cycle form the mechanistic basis for DNA recombination by continuous HJ branch migration. Branch migration allows RuvC to scan DNA until it finds its consensus sequence, where it cleaves and resolves cruciform DNA. The chain is Holliday junction branch migration complex subunit RuvB from Trichlorobacter lovleyi (strain ATCC BAA-1151 / DSM 17278 / SZ) (Geobacter lovleyi).